A 248-amino-acid polypeptide reads, in one-letter code: UDP-2,3-diacylglucosamine hydrolase (248 aa).

Mn(2+) is bound by residues aspartate 8, histidine 10, aspartate 41, asparagine 79, and histidine 114. 79-80 (NR) is a substrate binding site. The substrate site is built by aspartate 122, asparagine 164, arginine 167, and histidine 195. Residues histidine 195 and histidine 197 each coordinate Mn(2+).

It belongs to the LpxH family. Requires Mn(2+) as cofactor.

It localises to the cell inner membrane. It catalyses the reaction UDP-2-N,3-O-bis[(3R)-3-hydroxytetradecanoyl]-alpha-D-glucosamine + H2O = 2-N,3-O-bis[(3R)-3-hydroxytetradecanoyl]-alpha-D-glucosaminyl 1-phosphate + UMP + 2 H(+). The protein operates within glycolipid biosynthesis; lipid IV(A) biosynthesis; lipid IV(A) from (3R)-3-hydroxytetradecanoyl-[acyl-carrier-protein] and UDP-N-acetyl-alpha-D-glucosamine: step 4/6. Hydrolyzes the pyrophosphate bond of UDP-2,3-diacylglucosamine to yield 2,3-diacylglucosamine 1-phosphate (lipid X) and UMP by catalyzing the attack of water at the alpha-P atom. Involved in the biosynthesis of lipid A, a phosphorylated glycolipid that anchors the lipopolysaccharide to the outer membrane of the cell. This chain is UDP-2,3-diacylglucosamine hydrolase, found in Wigglesworthia glossinidia brevipalpis.